Consider the following 328-residue polypeptide: Ribosomal RNA small subunit methyltransferase C (328 aa).

The protein belongs to the methyltransferase superfamily. RsmC family. Monomer.

The protein resides in the cytoplasm. It carries out the reaction guanosine(1207) in 16S rRNA + S-adenosyl-L-methionine = N(2)-methylguanosine(1207) in 16S rRNA + S-adenosyl-L-homocysteine + H(+). In terms of biological role, specifically methylates the guanine in position 1207 of 16S rRNA in the 30S particle. The protein is Ribosomal RNA small subunit methyltransferase C of Pasteurella multocida (strain Pm70).